A 496-amino-acid chain; its full sequence is Membrane-bound lytic murein transglycosylase F (496 aa).

Residues 1 to 31 (MPIFSTRVLTYLRCIFRLFIGLTLLLTLVGC) form the signal peptide. The segment at 32–271 (DFYTPSSQLE…KLDEKYFGHV (240 aa)) is non-LT domain. The segment at 273–496 (NFDFVDTRTF…AEVVKQITLR (224 aa)) is LT domain. E316 is a catalytic residue. Residues 464–486 (HRREELDDDDSSEPPSAERPTVI) are disordered.

It in the N-terminal section; belongs to the bacterial solute-binding protein 3 family. This sequence in the C-terminal section; belongs to the transglycosylase Slt family.

It is found in the cell outer membrane. It carries out the reaction Exolytic cleavage of the (1-&gt;4)-beta-glycosidic linkage between N-acetylmuramic acid (MurNAc) and N-acetylglucosamine (GlcNAc) residues in peptidoglycan, from either the reducing or the non-reducing ends of the peptidoglycan chains, with concomitant formation of a 1,6-anhydrobond in the MurNAc residue.. In terms of biological role, murein-degrading enzyme that degrades murein glycan strands and insoluble, high-molecular weight murein sacculi, with the concomitant formation of a 1,6-anhydromuramoyl product. Lytic transglycosylases (LTs) play an integral role in the metabolism of the peptidoglycan (PG) sacculus. Their lytic action creates space within the PG sacculus to allow for its expansion as well as for the insertion of various structures such as secretion systems and flagella. The polypeptide is Membrane-bound lytic murein transglycosylase F (Aeromonas hydrophila subsp. hydrophila (strain ATCC 7966 / DSM 30187 / BCRC 13018 / CCUG 14551 / JCM 1027 / KCTC 2358 / NCIMB 9240 / NCTC 8049)).